We begin with the raw amino-acid sequence, 246 residues long: Trypsin V-B (246 aa).

The N-terminal stretch at M1 to A15 is a signal peptide. A propeptide spans F16–R24 (activation peptide). A Peptidase S1 domain is found at I25–A244. Cystine bridges form between C31-C160, C49-C65, C133-C233, C140-C206, C171-C185, and C196-C220. Residue H64 is the Charge relay system of the active site. Ca(2+)-binding residues include E76, N78, and E86. D108 serves as the catalytic Charge relay system. S200 (charge relay system) is an active-site residue.

It belongs to the peptidase S1 family. The cofactor is Ca(2+).

The protein localises to the secreted. Its subcellular location is the extracellular space. It catalyses the reaction Preferential cleavage: Arg-|-Xaa, Lys-|-Xaa.. This Rattus norvegicus (Rat) protein is Trypsin V-B.